The primary structure comprises 625 residues: UvrABC system protein C (625 aa).

The region spanning 26–105 (LEPGVYFLRD…IKQHQPHFNT (80 aa)) is the GIY-YIG domain. Residues 215 to 250 (GELLEKLATKMLAASENLDFEQAATIRDQIRGLQAL) form the UVR domain.

It belongs to the UvrC family. As to quaternary structure, interacts with UvrB in an incision complex.

It is found in the cytoplasm. Functionally, the UvrABC repair system catalyzes the recognition and processing of DNA lesions. UvrC both incises the 5' and 3' sides of the lesion. The N-terminal half is responsible for the 3' incision and the C-terminal half is responsible for the 5' incision. The protein is UvrABC system protein C of Microcystis aeruginosa (strain NIES-843 / IAM M-2473).